An 87-amino-acid polypeptide reads, in one-letter code: U3-theraphotoxin-Hhn1q (87 aa).

The signal sequence occupies residues 1–24 (MVNMKASMFLTFAGLVLLFVVCYA). The propeptide occupies 25-52 (SESEEKEFPKEMLSSIFAVDNDFKQEER). 3 disulfide bridges follow: cysteine 54–cysteine 67, cysteine 61–cysteine 72, and cysteine 66–cysteine 79.

It belongs to the neurotoxin 10 (Hwtx-1) family. 51 (Hntx-8) subfamily. Hntx-8 sub-subfamily. As to expression, expressed by the venom gland.

The protein localises to the secreted. Ion channel inhibitor. The protein is U3-theraphotoxin-Hhn1q of Cyriopagopus hainanus (Chinese bird spider).